A 113-amino-acid chain; its full sequence is Hydrogenase maturation factor HybF (113 aa).

Ni(2+) contacts are provided by His-2 and Glu-3. The Zn(2+) site is built by Cys-73, Cys-76, Cys-89, and Cys-92.

It belongs to the HypA/HybF family. HybF subfamily.

Functionally, involved in the maturation of [NiFe] hydrogenases. Required for nickel insertion into the metal center of the hydrogenase. This Escherichia coli O6:H1 (strain CFT073 / ATCC 700928 / UPEC) protein is Hydrogenase maturation factor HybF.